A 479-amino-acid chain; its full sequence is D-hydantoinase/dihydropyrimidinase (479 aa).

Zn(2+) contacts are provided by H59, H61, and K150. K150 is subject to N6-carboxylysine. Substrate is bound at residue Y155. Zn(2+) is bound by residues H183 and H239. Residue S289 coordinates substrate. D316 is a binding site for Zn(2+). N337 provides a ligand contact to substrate.

Belongs to the metallo-dependent hydrolases superfamily. Hydantoinase/dihydropyrimidinase family. As to quaternary structure, homotetramer. Zn(2+) serves as cofactor. In terms of processing, carboxylation allows a single lysine to coordinate two zinc ions.

It carries out the reaction 5,6-dihydrouracil + H2O = 3-(carbamoylamino)propanoate + H(+). Catalyzes the hydrolysis of dihydropyrimidines and of the structurally related DL-5-mono-substituted hydantoins, to produce N-carbamoyl-D-amino acids. The protein is D-hydantoinase/dihydropyrimidinase (dht) of Pseudomonas aeruginosa (strain ATCC 15692 / DSM 22644 / CIP 104116 / JCM 14847 / LMG 12228 / 1C / PRS 101 / PAO1).